The primary structure comprises 340 residues: Annexin A2-A (340 aa).

The segment at 2–25 (ALIHEILGKLSLEGNQSCARQSAL) is P10 binding site. Annexin repeat units lie at residues 34 to 105 (FDAE…GLIK), 106 to 177 (TRPQ…ALAK), 190 to 262 (EKID…NLVQ), and 266 to 337 (NKPL…NLCG).

Belongs to the annexin family. Tetramer of 2 light chains (p10 proteins) and 2 heavy chains (p36 proteins).

It localises to the secreted. The protein resides in the extracellular space. The protein localises to the extracellular matrix. It is found in the basement membrane. Functionally, calcium-regulated membrane-binding protein whose affinity for calcium is greatly enhanced by anionic phospholipids. It binds two calcium ions with high affinity. This Xenopus laevis (African clawed frog) protein is Annexin A2-A (anxa2-a).